Consider the following 439-residue polypeptide: Na(+)/H(+) antiporter NhaA 1 (439 aa).

11 consecutive transmembrane segments (helical) span residues 14-34 (ITGG…ANLA), 60-80 (ISLH…FIGL), 98-118 (ALPL…YYFF), 127-147 (GWGI…AMVG), 156-176 (IFLS…IAIF), 179-199 (EQIF…LAVA), 213-233 (IGLI…TIAG), 303-323 (HPIS…GVIV), 335-355 (IVLG…FLFA), 375-395 (IIGT…ISDL), and 408-428 (VAVL…LISA).

The protein belongs to the NhaA Na(+)/H(+) (TC 2.A.33) antiporter family.

It is found in the cell inner membrane. It carries out the reaction Na(+)(in) + 2 H(+)(out) = Na(+)(out) + 2 H(+)(in). Functionally, na(+)/H(+) antiporter that extrudes sodium in exchange for external protons. The protein is Na(+)/H(+) antiporter NhaA 1 of Psychromonas ingrahamii (strain DSM 17664 / CCUG 51855 / 37).